The chain runs to 199 residues: Glycerol-3-phosphate acyltransferase (199 aa).

5 helical membrane passes run 4–24 (FALFYMLFAYLLGSISSAILI), 56–76 (LAVLIFDMLKGMIPVWAGYYL), 80–100 (QFELGMVALGACLGHIFPIFF), 115–135 (IAPISWAVAGSMFGTWIFVFL), and 154–176 (YVWWFKPEFTFPVALVCCLLIYR).

It belongs to the PlsY family. In terms of assembly, probably interacts with PlsX.

It is found in the cell inner membrane. The enzyme catalyses an acyl phosphate + sn-glycerol 3-phosphate = a 1-acyl-sn-glycero-3-phosphate + phosphate. It functions in the pathway lipid metabolism; phospholipid metabolism. Functionally, catalyzes the transfer of an acyl group from acyl-phosphate (acyl-PO(4)) to glycerol-3-phosphate (G3P) to form lysophosphatidic acid (LPA). This enzyme utilizes acyl-phosphate as fatty acyl donor, but not acyl-CoA or acyl-ACP. In Haemophilus influenzae (strain PittGG), this protein is Glycerol-3-phosphate acyltransferase.